A 245-amino-acid chain; its full sequence is DNA repair protein RecO (245 aa).

The protein belongs to the RecO family.

Functionally, involved in DNA repair and RecF pathway recombination. In Erwinia tasmaniensis (strain DSM 17950 / CFBP 7177 / CIP 109463 / NCPPB 4357 / Et1/99), this protein is DNA repair protein RecO.